We begin with the raw amino-acid sequence, 590 residues long: Aspartate--tRNA ligase (590 aa).

Glutamate 174 contributes to the L-aspartate binding site. Positions 198–201 (QLMK) are aspartate. Arginine 220 contacts L-aspartate. ATP-binding positions include 220 to 222 (RDE) and glutamine 229. Histidine 443 lines the L-aspartate pocket. Residue glutamate 484 coordinates ATP. Arginine 491 contacts L-aspartate. Residue 536 to 539 (GLDR) coordinates ATP.

Belongs to the class-II aminoacyl-tRNA synthetase family. Type 1 subfamily. Homodimer.

It is found in the cytoplasm. The catalysed reaction is tRNA(Asp) + L-aspartate + ATP = L-aspartyl-tRNA(Asp) + AMP + diphosphate. Functionally, catalyzes the attachment of L-aspartate to tRNA(Asp) in a two-step reaction: L-aspartate is first activated by ATP to form Asp-AMP and then transferred to the acceptor end of tRNA(Asp). The protein is Aspartate--tRNA ligase of Lactococcus lactis subsp. cremoris (strain MG1363).